Here is a 469-residue protein sequence, read N- to C-terminus: Regulator of G-protein signaling 7 (469 aa).

Residues 37-112 (EKNGIPIRTV…DDGTFYRFQT (76 aa)) enclose the DEP domain. Phosphoserine is present on residues serine 229 and serine 241. The tract at residues 236-255 (DIRSHSPTHTPTPETKPPTE) is disordered. A Phosphothreonine modification is found at threonine 243. Residues 255–316 (EDELHQQIKY…LSDDTTFWEL (62 aa)) form the G protein gamma domain. The region spanning 333 to 448 (GMDEALKDPV…IRSSAYQELL (116 aa)) is the RGS domain. Position 434 is a phosphoserine (serine 434).

As to quaternary structure, interacts with GNB5, forming the RGS7-GNB5 complex. Interacts with GPR158; promotes the GTPase activator activity of the RGS7-GNB5 complex in absence of glycine, in contrast GTPase activator activity of the RGS7-GNB5 complex is inhibited in presence of glycine. Interacts with GPR179. Interacts with PKD1; this prevents rapid proteasomal degradation. Interacts with RGS7BP, leading to regulate the subcellular location of the heterodimer formed with GNB5. Interacts (phosphorylated form) with 14-3-3 protein YWHAQ. Interacts with SNAPIN. Interacts with GNAI1. Interacts with GNAO1, GNAI3 and GNAZ. Palmitoylated. Post-translationally, ubiquitinated, leading to rapid proteasomal degradation. In terms of processing, phosphorylation and subsequent interaction with 14-3-3 proteins inhibits GAP activity. Detected in brain (at protein level).

The protein localises to the cytoplasm. It is found in the cytosol. It localises to the cell membrane. The protein resides in the membrane. In terms of biological role, GTPase activator component of the RGS7-GNB5 complex that regulates G protein-coupled receptor signaling cascades. The RGS7-GNB5 complex acts as an inhibitor signal transduction by promoting the GTPase activity of G protein alpha subunits, such as GNAO1, thereby driving them into their inactive GDP-bound form. May play a role in synaptic vesicle exocytosis. Glycine-dependent regulation of the RGS7-GNB5 complex by GPR158 affects mood and cognition via its ability to regulate neuronal excitability in L2/L3 pyramidal neurons of the prefrontal cortex. Modulates the activity of potassium channels that are activated by GNAO1 in response to muscarinic acetylcholine receptor M2/CHRM2 signaling. The sequence is that of Regulator of G-protein signaling 7 (Rgs7) from Mus musculus (Mouse).